The following is a 773-amino-acid chain: Protein YhgF (773 aa).

The 70-residue stretch at 651-720 (GMILEGAVTN…QRKRIALTMR (70 aa)) folds into the S1 motif domain. The segment at 721-773 (LDEQPGETNARRGGGNERPQNNRPAAKPRGREAQPAGNSAMMDALAAAMGKKR) is disordered.

The polypeptide is Protein YhgF (yhgF) (Escherichia coli (strain K12)).